The sequence spans 211 residues: Uracil phosphoribosyltransferase (211 aa).

5-phospho-alpha-D-ribose 1-diphosphate is bound by residues R79, R104, and 131-139; that span reads DPMLATGGS. Uracil-binding positions include I196 and 201–203; that span reads GDA. Position 202 (D202) interacts with 5-phospho-alpha-D-ribose 1-diphosphate.

This sequence belongs to the UPRTase family. The cofactor is Mg(2+).

It carries out the reaction UMP + diphosphate = 5-phospho-alpha-D-ribose 1-diphosphate + uracil. It participates in pyrimidine metabolism; UMP biosynthesis via salvage pathway; UMP from uracil: step 1/1. With respect to regulation, allosterically activated by GTP. Its function is as follows. Catalyzes the conversion of uracil and 5-phospho-alpha-D-ribose 1-diphosphate (PRPP) to UMP and diphosphate. The polypeptide is Uracil phosphoribosyltransferase (Lactococcus lactis subsp. cremoris (strain MG1363)).